A 165-amino-acid polypeptide reads, in one-letter code: NADPH-dependent 7-cyano-7-deazaguanine reductase (165 aa).

Residues 1–24 (MTTRSTDQTEHLRALGQKTPYPAA) are disordered. Cys-56 serves as the catalytic Thioimide intermediate. Asp-63 serves as the catalytic Proton donor. Substrate is bound by residues 78–80 (VES) and 97–98 (ME).

Belongs to the GTP cyclohydrolase I family. QueF type 1 subfamily.

The protein resides in the cytoplasm. It carries out the reaction 7-aminomethyl-7-carbaguanine + 2 NADP(+) = 7-cyano-7-deazaguanine + 2 NADPH + 3 H(+). The protein operates within tRNA modification; tRNA-queuosine biosynthesis. Functionally, catalyzes the NADPH-dependent reduction of 7-cyano-7-deazaguanine (preQ0) to 7-aminomethyl-7-deazaguanine (preQ1). The protein is NADPH-dependent 7-cyano-7-deazaguanine reductase of Nitratidesulfovibrio vulgaris (strain ATCC 29579 / DSM 644 / CCUG 34227 / NCIMB 8303 / VKM B-1760 / Hildenborough) (Desulfovibrio vulgaris).